The sequence spans 300 residues: Dipeptide transport system permease protein DppC (300 aa).

At 1-31 (MSQVTENKVISAPVPMTPLQEFWHYFKRNKG) the chain is on the cytoplasmic side. A helical membrane pass occupies residues 32–52 (AVVGLVYVVIVLFIAIFANWI). At 53–101 (APYNPAEQFRDALLAPPAWQEGGSMAHLLGTDDVGRDVLSRLMYGARLS) the chain is on the periplasmic side. Positions 98–287 (ARLSLLVGCL…LTVLAFNLMG (190 aa)) constitute an ABC transmembrane type-1 domain. A helical transmembrane segment spans residues 102 to 122 (LLVGCLVVVLSLIMGVILGLI). Topologically, residues 123-136 (AGYFGGLVDNIIMR) are cytoplasmic. The chain crosses the membrane as a helical span at residues 137–157 (VVDIMLALPSLLLALVLVAIF). Over 158–206 (GPSIGNAALALTFVALPHYVRLTRAAVLVEVNRDYVTASRVAGAGAMRQ) the chain is Periplasmic. Residues 207 to 227 (MFINIFPNCLAPLIVQASLGF) form a helical membrane-spanning segment. At 228 to 230 (SNA) the chain is on the cytoplasmic side. The chain crosses the membrane as a helical span at residues 231-251 (ILDMAALGFLGMGAQPPTPEW). At 252–265 (GTMLSDVLQFAQSA) the chain is on the periplasmic side. A helical transmembrane segment spans residues 266–286 (WWVVTFPGLAILLTVLAFNLM). Residues 287–300 (GDGLRDALDPKLKQ) lie on the Cytoplasmic side of the membrane.

The protein belongs to the binding-protein-dependent transport system permease family. OppBC subfamily. In terms of assembly, the complex is composed of two ATP-binding proteins (DppD and DppF), two transmembrane proteins (DppB and DppC) and a solute-binding protein (DppA).

Its subcellular location is the cell inner membrane. In terms of biological role, part of the ABC transporter DppABCDF involved in dipeptide transport. Responsible for the translocation of the substrate across the membrane. The polypeptide is Dipeptide transport system permease protein DppC (dppC) (Escherichia coli O157:H7).